The sequence spans 170 residues: uncharacterized protein (170 aa).

Residues 1–15 (MFLTSPFESCIVLSS) are Cytoplasmic-facing. The helical transmembrane segment at 16 to 36 (LIAGLLFSLSTGFVGILGVFA) threads the bilayer. Topologically, residues 37 to 76 (SLFETELSVSPKRLSLSSLSWPKTFWALLSSVEGVSWESS) are extracellular. A helical transmembrane segment spans residues 77 to 97 (LFACIVGCCFAVTVIASLSAS). Residues 98 to 119 (RVFGTVASSFRDSSCCCDSSPA) are Cytoplasmic-facing. The helical transmembrane segment at 120-140 (VSVLATPATAALALLSLLLSL) threads the bilayer. Topologically, residues 141–170 (PCWSTSTEAFTVDPSPSVFSMLANRITIGL) are extracellular.

It localises to the membrane. This is an uncharacterized protein from Saccharomyces cerevisiae (strain ATCC 204508 / S288c) (Baker's yeast).